The sequence spans 508 residues: Photosystem II CP47 reaction center protein (508 aa).

The next 6 membrane-spanning stretches (helical) occupy residues 21 to 36 (AVHL…WAGS), 101 to 115 (IVLS…IWHW), 140 to 156 (GIHL…FGAF), 203 to 218 (IAAG…FHLC), 237 to 252 (VLSS…AFVV), and 457 to 472 (CFAL…HGAR).

This sequence belongs to the PsbB/PsbC family. PsbB subfamily. PSII is composed of 1 copy each of membrane proteins PsbA, PsbB, PsbC, PsbD, PsbE, PsbF, PsbH, PsbI, PsbJ, PsbK, PsbL, PsbM, PsbT, PsbX, PsbY, PsbZ, Psb30/Ycf12, at least 3 peripheral proteins of the oxygen-evolving complex and a large number of cofactors. It forms dimeric complexes. The cofactor is Binds multiple chlorophylls. PSII binds additional chlorophylls, carotenoids and specific lipids..

It localises to the plastid. The protein localises to the chloroplast thylakoid membrane. One of the components of the core complex of photosystem II (PSII). It binds chlorophyll and helps catalyze the primary light-induced photochemical processes of PSII. PSII is a light-driven water:plastoquinone oxidoreductase, using light energy to abstract electrons from H(2)O, generating O(2) and a proton gradient subsequently used for ATP formation. This Chlorella vulgaris (Green alga) protein is Photosystem II CP47 reaction center protein.